The following is a 175-amino-acid chain: uncharacterized protein (175 aa).

An N-terminal signal peptide occupies residues 1 to 33 (MERLPYEIVSTIFRKAILHYVLIRGTTYPQSLA).

This is an uncharacterized protein from Methanocaldococcus jannaschii (strain ATCC 43067 / DSM 2661 / JAL-1 / JCM 10045 / NBRC 100440) (Methanococcus jannaschii).